The chain runs to 425 residues: DNA replication and repair protein RecF (425 aa).

Residue 30–37 (GPNGHGKT) participates in ATP binding.

The protein belongs to the RecF family.

It localises to the cytoplasm. Functionally, the RecF protein is involved in DNA metabolism; it is required for DNA replication and normal SOS inducibility. RecF binds preferentially to single-stranded, linear DNA. It also seems to bind ATP. The protein is DNA replication and repair protein RecF of Corynebacterium jeikeium (strain K411).